A 336-amino-acid chain; its full sequence is Poly(A) RNA polymerase cid12 (336 aa).

Mg(2+) is bound by residues aspartate 77 and aspartate 79. Residues 209–263 (ALLQKFFYFWGVEWTYELFVLRPLTGQIVPKLQKGWLNEVQPNLLSIEDPIDRNN) form the PAP-associated domain. A Phosphoserine modification is found at serine 325. At threonine 327 the chain carries Phosphothreonine. Serine 329 is subject to Phosphoserine.

The protein belongs to the DNA polymerase type-B-like family. Cid12, hrr1 and rdp1 interact forming the RNA-directed RNA polymerase complex (RDRC). The RDRC complex interacts with the RITS complex via interaction between ago1 and hrr1. Clr4 has a role in mediating this interaction. The cofactor is Mg(2+). Mn(2+) is required as a cofactor.

It localises to the cytoplasm. It is found in the nucleus. The enzyme catalyses RNA(n) + ATP = RNA(n)-3'-adenine ribonucleotide + diphosphate. In terms of biological role, has a role in the RNA interference (RNAi) pathway which is important for heterochromatin formation and accurate chromosome segregation. A member of the RNA-directed RNA polymerase complex (RDRC) which is involved in the generation of small interfering RNAs (siRNAs) and mediate their association with the RNA-induced transcriptional silencing (RITS) complex. RITS acts as a priming complex for dsRNA synthesis at the site of non-coding centromeric RNA. The chain is Poly(A) RNA polymerase cid12 (cid12) from Schizosaccharomyces pombe (strain 972 / ATCC 24843) (Fission yeast).